Reading from the N-terminus, the 417-residue chain is Phosphatidylcholine:ceramide cholinephosphotransferase 1 (417 aa).

One can recognise an SAM domain in the interval 11–74; it reads WSPEEVTNWL…LHMIETLKMA (64 aa). Helical transmembrane passes span 140 to 160, 188 to 208, 219 to 239, 280 to 300, and 308 to 328; these read FLAF…ISVV, FSIC…QWLL, FFCI…VTTL, MCGD…YLFI, and LWWY…CILL. Histidine 289 is an active-site residue. The Cytoplasmic portion of the chain corresponds to 329–417; it reads AHDHYTVDVV…VKYSRLVNDT (89 aa). Catalysis depends on residues histidine 332 and aspartate 336.

The protein belongs to the sphingomyelin synthase family.

Its subcellular location is the golgi apparatus membrane. It catalyses the reaction an N-acylsphing-4-enine + a 1,2-diacyl-sn-glycero-3-phosphocholine = a sphingomyelin + a 1,2-diacyl-sn-glycerol. The enzyme catalyses an N-acylsphing-4-enine + a 1,2-diacyl-sn-glycero-3-phosphoethanolamine = an N-acylsphing-4-enine 1-phosphoethanolamine + a 1,2-diacyl-sn-glycerol. Major sphingomyelin synthase at the Golgi apparatus. Catalyzes the reversible transfer of phosphocholine moiety in sphingomyelin biosynthesis: in the forward reaction transfers phosphocholine head group of phosphatidylcholine (PC) on to ceramide (CER) to form ceramide phosphocholine (sphingomyelin, SM) and diacylglycerol (DAG) as by-product, and in the reverse reaction transfers phosphocholine from SM to DAG to form PC and CER. The direction of the reaction depends on the levels of CER and DAG in Golgi membranes. Converts the newly synthesized CER, that is transported from the endoplasmic reticulum to the trans-Golgi by the Cer transport protein (CERT), to SM. Can form a heteromeric complex with glucosylceramide synthase (GCS) increasing SMS activity and reducing glucosylceramide synthesis, a critical mechanism that controls the metabolic fate of CER in the Golgi. Does not use free phosphorylcholine or CDP-choline as donor. Can also transfer phosphoethanolamine head group of phosphatidylethanolamine (PE) on to CER to form ceramide phosphoethanolamine (CPE). Regulates receptor-mediated signal transduction via mitogenic DAG and proapoptotic CER, as well as via SM, a structural component of membrane rafts that serve as platforms for signal transduction and protein sorting. Plays a role in secretory transport via regulation of DAG pool at the Golgi apparatus and its downstream effects on PRKD1. This Gallus gallus (Chicken) protein is Phosphatidylcholine:ceramide cholinephosphotransferase 1 (SGMS1).